Reading from the N-terminus, the 165-residue chain is MLMYQVKPGETLESIAADFRTTRQALLQANPGLNGGQVSAGQSIIIPGIRNPDTIPYRIAVSLNGRTLRLYERDRLVKTYPIAVGKILTQTPRGEFVIVNRQPNPGGPFGAYWLSLSKQHYGIHGTNNPSSIGKAVSRGCIRMHNRDVLELASIVPNGTRVSITP.

The region spanning 2 to 46 (LMYQVKPGETLESIAADFRTTRQALLQANPGLNGGQVSAGQSIII) is the LysM domain. The region spanning 57 to 164 (YRIAVSLNGR…VPNGTRVSIT (108 aa)) is the L,D-TPase catalytic domain. The Proton donor/acceptor role is filled by H124. C140 (nucleophile) is an active-site residue.

This sequence belongs to the YkuD family. In terms of assembly, monomer.

It localises to the spore wall. The protein operates within cell wall biogenesis; peptidoglycan biosynthesis. Probable enzyme that may play an important role in cell wall biology. In Bacillus licheniformis (strain ATCC 14580 / DSM 13 / JCM 2505 / CCUG 7422 / NBRC 12200 / NCIMB 9375 / NCTC 10341 / NRRL NRS-1264 / Gibson 46), this protein is Putative L,D-transpeptidase YkuD.